Reading from the N-terminus, the 1041-residue chain is Sarcoplasmic/endoplasmic reticulum calcium ATPase 2 (1041 aa).

The Cytoplasmic segment spans residues 1-48 (MENAHTKTVEEVLAYFGVNESTGLSLEQVKKLKEKWGSNELPAEEGKT). Residues 49–69 (LLELVIEQFEDLLVRILLLAA) form a helical membrane-spanning segment. Topologically, residues 70-89 (CISFVLAWFEEGEETITAFV) are lumenal. The chain crosses the membrane as a helical span at residues 90–110 (EPFVILLILVANAIVGVWQER). The Cytoplasmic portion of the chain corresponds to 111 to 253 (NAENAIEALK…QERTPLQQKL (143 aa)). Residues 254–273 (DEFGEQLSKVISLICIAVWI) form a helical membrane-spanning segment. Residues 274–295 (INIGHFNDPVHGGSWIRGAIYY) lie on the Lumenal side of the membrane. A helical transmembrane segment spans residues 296–313 (FKIAVALAVAAIPEGLPA). Ca(2+) contacts are provided by V304, A305, I307, and E309. Topologically, residues 314–756 (VITTCLALGT…EEGRAIYNNM (443 aa)) are cytoplasmic. Catalysis depends on D351, which acts as the 4-aspartylphosphate intermediate. 2 residues coordinate Mg(2+): D351 and T353. ATP-binding residues include T353, E442, R489, K514, R559, T624, G625, D626, R677, and K683. D702 contributes to the Mg(2+) binding site. N705 contributes to the ATP binding site. Residues 757–776 (KQFIRYLISSNVGEVVCIFL) traverse the membrane as a helical segment. Residues N767 and E770 each coordinate Ca(2+). The Lumenal portion of the chain corresponds to 777-786 (TAALGFPEAL). Residues 787 to 807 (IPVQLLWVNLVTDGLPATALG) traverse the membrane as a helical segment. Residues 787 to 807 (IPVQLLWVNLVTDGLPATALG) form an interaction with PLN region. Residues N795, T798, and D799 each contribute to the Ca(2+) site. The Cytoplasmic portion of the chain corresponds to 808–827 (FNPPDLDIMNKPPRNPKEPL). The chain crosses the membrane as a helical span at residues 828 to 850 (ISGWLFFRYLAIGCYVGAATVGA). Over 851 to 896 (AAWWFIAADGGPRVTFYQLSHFLQCKEDNPDFSGVDCVVFESPYPM) the chain is Lumenal. A disulfide bridge links C875 with C887. The chain crosses the membrane as a helical span at residues 897–916 (TMALSVLVTIEMCNALNSLS). E907 is a Ca(2+) binding site. The Cytoplasmic segment spans residues 917–929 (ENQSLMRMPPWEN). The chain crosses the membrane as a helical span at residues 930-948 (IWLVGAICLSMSLHFLILY). The interval 931 to 942 (WLVGAICLSMSL) is interaction with PLN. At 949 to 963 (VEPLPIIFQITPLNV) the chain is on the lumenal side. Residues 964 to 984 (TQWLMVLKISLPVILLDETLK) traverse the membrane as a helical segment. Residues 985-1041 (YVARNYLEPGKDSVQPATKPCSLSACTEGVSWPFVFITLPLVIWLYSTDTNFSDMFW) lie on the Cytoplasmic side of the membrane.

It belongs to the cation transport ATPase (P-type) (TC 3.A.3) family. Type IIA subfamily. Interacts with sarcolipin (SLN). Interacts with phospholamban (PLN). Interacts with myoregulin (MRLN). Interacts with DWORF. Interacts with TMX2. The cofactor is Mg(2+). As to expression, only isoform 2 is detected in heart, while both isoforms are expressed in brain, with isoform 2 being predominant.

It localises to the endoplasmic reticulum membrane. It is found in the sarcoplasmic reticulum membrane. It carries out the reaction Ca(2+)(in) + ATP + H2O = Ca(2+)(out) + ADP + phosphate + H(+). With respect to regulation, reversibly inhibited by phospholamban (PLN) at low calcium concentrations. Inhibited by sarcolipin (SLN) and myoregulin (MRLN). Enhanced by DWORF; DWORF increases activity by displacing sarcolipin (SLN), phospholamban (PLN) and myoregulin (MRLN). Its function is as follows. This magnesium-dependent enzyme catalyzes the hydrolysis of ATP coupled with the translocation of calcium from the cytosol to the sarcoplasmic reticulum lumen. Isoform SERCA2A is involved in the regulation of the contraction/relaxation cycle. May act as a regulator of TNFSF11-mediated Ca(2+) signaling during osteoclastogenesis. The polypeptide is Sarcoplasmic/endoplasmic reticulum calcium ATPase 2 (ATP2A2) (Gallus gallus (Chicken)).